Consider the following 366-residue polypeptide: tRNA/tmRNA (uracil-C(5))-methyltransferase (366 aa).

S-adenosyl-L-methionine is bound by residues glutamine 190, tyrosine 218, asparagine 223, glutamate 239, and aspartate 299. The active-site Nucleophile is cysteine 324. The active-site Proton acceptor is the glutamate 358.

Belongs to the class I-like SAM-binding methyltransferase superfamily. RNA M5U methyltransferase family. TrmA subfamily.

It catalyses the reaction uridine(54) in tRNA + S-adenosyl-L-methionine = 5-methyluridine(54) in tRNA + S-adenosyl-L-homocysteine + H(+). The enzyme catalyses uridine(341) in tmRNA + S-adenosyl-L-methionine = 5-methyluridine(341) in tmRNA + S-adenosyl-L-homocysteine + H(+). Functionally, dual-specificity methyltransferase that catalyzes the formation of 5-methyluridine at position 54 (m5U54) in all tRNAs, and that of position 341 (m5U341) in tmRNA (transfer-mRNA). This chain is tRNA/tmRNA (uracil-C(5))-methyltransferase, found in Klebsiella pneumoniae subsp. pneumoniae (strain ATCC 700721 / MGH 78578).